Here is a 218-residue protein sequence, read N- to C-terminus: Enhancer of split M2 protein (218 aa).

Low complexity predominate over residues 1 to 25; the sequence is MYLDTKNLTASSTSALTAATASNSK. Disordered stretches follow at residues 1 to 30, 64 to 86, and 137 to 164; these read MYLD…TRRM, NTQQ…KSTP, and GRNC…SSSA. Positions 147–163 are enriched in low complexity; the sequence is SSNINSSSSSSNMNSSS.

Functionally, part of the Notch signaling pathway. The polypeptide is Enhancer of split M2 protein (Drosophila melanogaster (Fruit fly)).